The sequence spans 58 residues: MAVPKRKKSKSRRNMHRSHLGLVAPNVVIDPTTGEYKLSHHVCLGGYYNGKQVAKSKV.

Belongs to the bacterial ribosomal protein bL32 family.

This is Large ribosomal subunit protein bL32 from Anaplasma phagocytophilum (strain HZ).